The sequence spans 94 residues: Large ribosomal subunit protein bL28 (94 aa).

The tract at residues 1-21 (MARRCEVTGRGTVSGNNVSHS) is disordered. Polar residues predominate over residues 11-20 (GTVSGNNVSH).

Belongs to the bacterial ribosomal protein bL28 family.

The polypeptide is Large ribosomal subunit protein bL28 (Leptospira interrogans serogroup Icterohaemorrhagiae serovar copenhageni (strain Fiocruz L1-130)).